The chain runs to 211 residues: Uridine kinase (211 aa).

12–19 (GGSGSGKT) provides a ligand contact to ATP.

It belongs to the uridine kinase family.

The protein resides in the cytoplasm. It carries out the reaction uridine + ATP = UMP + ADP + H(+). It catalyses the reaction cytidine + ATP = CMP + ADP + H(+). It participates in pyrimidine metabolism; CTP biosynthesis via salvage pathway; CTP from cytidine: step 1/3. The protein operates within pyrimidine metabolism; UMP biosynthesis via salvage pathway; UMP from uridine: step 1/1. The protein is Uridine kinase (udk) of Bacillus subtilis (strain 168).